The primary structure comprises 549 residues: Glucose-6-phosphate isomerase (549 aa).

Glu-355 (proton donor) is an active-site residue. Residues His-387 and Lys-515 contribute to the active site.

It belongs to the GPI family.

It localises to the cytoplasm. The enzyme catalyses alpha-D-glucose 6-phosphate = beta-D-fructose 6-phosphate. It participates in carbohydrate biosynthesis; gluconeogenesis. The protein operates within carbohydrate degradation; glycolysis; D-glyceraldehyde 3-phosphate and glycerone phosphate from D-glucose: step 2/4. Functionally, catalyzes the reversible isomerization of glucose-6-phosphate to fructose-6-phosphate. The chain is Glucose-6-phosphate isomerase from Pasteurella multocida (strain Pm70).